Here is a 264-residue protein sequence, read N- to C-terminus: Phosphonoacetaldehyde hydrolase (264 aa).

Catalysis depends on Asp9, which acts as the Nucleophile. Mg(2+)-binding residues include Asp9 and Ala11. Lys50 acts as the Schiff-base intermediate with substrate in catalysis. Asp183 provides a ligand contact to Mg(2+).

This sequence belongs to the HAD-like hydrolase superfamily. PhnX family. As to quaternary structure, homodimer. Mg(2+) is required as a cofactor.

The catalysed reaction is phosphonoacetaldehyde + H2O = acetaldehyde + phosphate + H(+). Functionally, involved in phosphonate degradation. In Bacillus cereus (strain AH187), this protein is Phosphonoacetaldehyde hydrolase.